A 605-amino-acid chain; its full sequence is Probable Xaa-Pro aminopeptidase P (605 aa).

The Mn(2+) site is built by D402, D413, E511, and E525.

The protein belongs to the peptidase M24B family. Requires Mn(2+) as cofactor.

It carries out the reaction Release of any N-terminal amino acid, including proline, that is linked to proline, even from a dipeptide or tripeptide.. Functionally, catalyzes the removal of a penultimate prolyl residue from the N-termini of peptides. In Leptosphaeria maculans (strain JN3 / isolate v23.1.3 / race Av1-4-5-6-7-8) (Blackleg fungus), this protein is Probable Xaa-Pro aminopeptidase P (AMPP).